The chain runs to 207 residues: Pyridoxal 5'-phosphate synthase subunit PdxT (207 aa).

51 to 53 is an L-glutamine binding site; sequence GES. The active-site Nucleophile is C83. L-glutamine contacts are provided by residues R112 and 143–144; that span reads IR. Residues H184 and E186 each act as charge relay system in the active site.

This sequence belongs to the glutaminase PdxT/SNO family. In the presence of PdxS, forms a dodecamer of heterodimers. Only shows activity in the heterodimer.

The catalysed reaction is aldehydo-D-ribose 5-phosphate + D-glyceraldehyde 3-phosphate + L-glutamine = pyridoxal 5'-phosphate + L-glutamate + phosphate + 3 H2O + H(+). The enzyme catalyses L-glutamine + H2O = L-glutamate + NH4(+). It functions in the pathway cofactor biosynthesis; pyridoxal 5'-phosphate biosynthesis. Its function is as follows. Catalyzes the hydrolysis of glutamine to glutamate and ammonia as part of the biosynthesis of pyridoxal 5'-phosphate. The resulting ammonia molecule is channeled to the active site of PdxS. The chain is Pyridoxal 5'-phosphate synthase subunit PdxT from Kineococcus radiotolerans (strain ATCC BAA-149 / DSM 14245 / SRS30216).